We begin with the raw amino-acid sequence, 508 residues long: DNA polymerase II small subunit (508 aa).

Residues 66-80 are compositionally biased toward low complexity; it reads ASSAAQTSAPASTPP. The segment at 66-122 is disordered; it reads ASSAAQTSAPASTPPDEATTHTDPSATDTPPNHDGGRAATADARSVEIDGDMTGAST. The span at 86–95 shows a compositional bias: polar residues; it reads HTDPSATDTP.

Belongs to the DNA polymerase delta/II small subunit family. In terms of assembly, heterodimer of a large subunit and a small subunit.

It carries out the reaction DNA(n) + a 2'-deoxyribonucleoside 5'-triphosphate = DNA(n+1) + diphosphate. The catalysed reaction is Exonucleolytic cleavage in the 3'- to 5'-direction to yield nucleoside 5'-phosphates.. Possesses two activities: a DNA synthesis (polymerase) and an exonucleolytic activity that degrades single-stranded DNA in the 3' to 5' direction. Has a template-primer preference which is characteristic of a replicative DNA polymerase. The chain is DNA polymerase II small subunit from Halobacterium salinarum (strain ATCC 29341 / DSM 671 / R1).